The sequence spans 267 residues: Glutamate racemase (267 aa).

Substrate-binding positions include 9–10 (DS) and 41–42 (YG). Cys-72 functions as the Proton donor/acceptor in the catalytic mechanism. Residue 73-74 (NT) participates in substrate binding. Cys-184 functions as the Proton donor/acceptor in the catalytic mechanism. 185–186 (TH) contributes to the substrate binding site.

This sequence belongs to the aspartate/glutamate racemases family.

The enzyme catalyses L-glutamate = D-glutamate. Its pathway is cell wall biogenesis; peptidoglycan biosynthesis. Its function is as follows. Provides the (R)-glutamate required for cell wall biosynthesis. This chain is Glutamate racemase, found in Staphylococcus epidermidis (strain ATCC 12228 / FDA PCI 1200).